The chain runs to 677 residues: Methionine--tRNA ligase (677 aa).

Residues 15–25 (PYANGSIHLGH) carry the 'HIGH' region motif. Cys146, Cys149, Cys159, and Cys162 together coordinate Zn(2+). A 'KMSKS' region motif is present at residues 333 to 337 (KMSKS). Position 336 (Lys336) interacts with ATP. A tRNA-binding domain is found at 575–677 (DFAKVDLRVA…DGAKPGQQVK (103 aa)).

Belongs to the class-I aminoacyl-tRNA synthetase family. MetG type 1 subfamily. Homodimer. The cofactor is Zn(2+).

The protein resides in the cytoplasm. The catalysed reaction is tRNA(Met) + L-methionine + ATP = L-methionyl-tRNA(Met) + AMP + diphosphate. Is required not only for elongation of protein synthesis but also for the initiation of all mRNA translation through initiator tRNA(fMet) aminoacylation. In Citrobacter koseri (strain ATCC BAA-895 / CDC 4225-83 / SGSC4696), this protein is Methionine--tRNA ligase.